A 448-amino-acid polypeptide reads, in one-letter code: C4-dicarboxylate transport protein 2 (448 aa).

Transmembrane regions (helical) follow at residues 13-33, 49-69, 81-101, 149-169, 193-213, 227-247, 294-314, 335-355, and 357-377; these read SLYVQVLAAVTIGVLLGHFSP, LIKMIIAPIIFCTVVIGIAGM, LALLYFEVMSTLALVIGLIVV, AFAKGEILQVLLFSVLFGFAL, IVGIIMKVAPIGAFGAMAFTI, LMGAFYLTCLIFVFVVLGIVS, VVGLVIPTGYSFNLDGTSIYL, ITLLAVLMLTSKGAAGITGSG, and IVLAATLSAVGGVPVAGLALI.

It belongs to the dicarboxylate/amino acid:cation symporter (DAACS) (TC 2.A.23) family.

Its subcellular location is the cell inner membrane. Its function is as follows. Responsible for the transport of dicarboxylates such as succinate, fumarate, and malate from the periplasm across the membrane. This is C4-dicarboxylate transport protein 2 from Polaromonas naphthalenivorans (strain CJ2).